Reading from the N-terminus, the 569-residue chain is Phenylalanine ammonia-lyase (569 aa).

Tyr-78 functions as the Proton donor/acceptor in the catalytic mechanism. The segment at residues Ala-167–Gly-169 is a cross-link (5-imidazolinone (Ala-Gly)). The residue at position 168 (Ser-168) is a 2,3-didehydroalanine (Ser). The (E)-cinnamate site is built by Asn-223, Gln-311, Arg-317, Asn-347, Lys-419, Glu-448, and Asn-451.

It belongs to the PAL/histidase family. Homotetramer. Post-translationally, contains an active site 4-methylidene-imidazol-5-one (MIO), which is formed autocatalytically by cyclization and dehydration of residues Ala-Ser-Gly.

Its subcellular location is the cytoplasm. The enzyme catalyses L-phenylalanine = (E)-cinnamate + NH4(+). The protein operates within phenylpropanoid metabolism; trans-cinnamate biosynthesis; trans-cinnamate from L-phenylalanine: step 1/1. Functionally, catalyzes the non-oxidative deamination of L-phenylalanine to form trans-cinnamic acid, the first step in the phenylpropanoid pathway. The polypeptide is Phenylalanine ammonia-lyase (Nostoc punctiforme (strain ATCC 29133 / PCC 73102)).